A 133-amino-acid polypeptide reads, in one-letter code: Thioredoxin H2 (133 aa).

Positions 1 to 22 are disordered; sequence MGGALSTVFGSGEDATAAGTES. A Thioredoxin domain is found at 6 to 133; sequence STVFGSGEDA…LEKKVSKLRA (128 aa). Residues Cys59 and Cys62 each act as nucleophile in the active site. Cys59 and Cys62 are joined by a disulfide.

The protein belongs to the thioredoxin family. Plant H-type subfamily. Interacts with MDH1.

It localises to the cytoplasm. It is found in the mitochondrion. Functionally, thiol-disulfide oxidoreductase probably involved in the redox regulation of a number of cytosolic enzymes. Possesses insulin disulfide bonds reducing activity. In Arabidopsis thaliana (Mouse-ear cress), this protein is Thioredoxin H2 (TRX2).